We begin with the raw amino-acid sequence, 67 residues long: Beta-defensin 123 (67 aa).

The N-terminal stretch at 1–20 is a signal peptide; it reads MKLLLLTLTVLLLLSQLTPG. 3 disulfide bridges follow: Cys25–Cys52, Cys32–Cys46, and Cys36–Cys53.

It belongs to the beta-defensin family. Abundant expression in the male reproductive tract only. Expressed abundantly in testis, while expression in epididymis decreased gradually from caput to cauda.

The protein resides in the secreted. In terms of biological role, has antibacterial activity. This Macaca mulatta (Rhesus macaque) protein is Beta-defensin 123 (DEFB123).